Consider the following 493-residue polypeptide: Glutamate--tRNA ligase (493 aa).

The short motif at 10–20 is the 'HIGH' region element; that stretch reads PSPTGDPHVGT. The short motif at 251-255 is the 'KMSKS' region element; that stretch reads KLSKR. Lys-254 serves as a coordination point for ATP.

The protein belongs to the class-I aminoacyl-tRNA synthetase family. Glutamate--tRNA ligase type 1 subfamily. Monomer.

It localises to the cytoplasm. It carries out the reaction tRNA(Glu) + L-glutamate + ATP = L-glutamyl-tRNA(Glu) + AMP + diphosphate. Catalyzes the attachment of glutamate to tRNA(Glu) in a two-step reaction: glutamate is first activated by ATP to form Glu-AMP and then transferred to the acceptor end of tRNA(Glu). This is Glutamate--tRNA ligase from Pseudomonas putida (strain ATCC 47054 / DSM 6125 / CFBP 8728 / NCIMB 11950 / KT2440).